The sequence spans 435 residues: Xylose isomerase (435 aa).

Catalysis depends on residues His-99 and Asp-102. Residues Glu-230, Glu-266, His-269, Asp-294, Asp-305, Asp-307, and Asp-337 each coordinate Mg(2+).

It belongs to the xylose isomerase family. In terms of assembly, homotetramer. The cofactor is Mg(2+).

Its subcellular location is the cytoplasm. It catalyses the reaction alpha-D-xylose = alpha-D-xylulofuranose. The protein is Xylose isomerase of Listeria welshimeri serovar 6b (strain ATCC 35897 / DSM 20650 / CCUG 15529 / CIP 8149 / NCTC 11857 / SLCC 5334 / V8).